The following is a 445-amino-acid chain: UDP-N-acetylmuramoylalanine--D-glutamate ligase (445 aa).

ATP is bound at residue 117–123 (GSNGKTT).

It belongs to the MurCDEF family.

Its subcellular location is the cytoplasm. The enzyme catalyses UDP-N-acetyl-alpha-D-muramoyl-L-alanine + D-glutamate + ATP = UDP-N-acetyl-alpha-D-muramoyl-L-alanyl-D-glutamate + ADP + phosphate + H(+). It functions in the pathway cell wall biogenesis; peptidoglycan biosynthesis. Functionally, cell wall formation. Catalyzes the addition of glutamate to the nucleotide precursor UDP-N-acetylmuramoyl-L-alanine (UMA). The sequence is that of UDP-N-acetylmuramoylalanine--D-glutamate ligase from Neisseria meningitidis serogroup C (strain 053442).